A 512-amino-acid polypeptide reads, in one-letter code: Maturase K (512 aa).

This sequence belongs to the intron maturase 2 family. MatK subfamily.

It is found in the plastid. Its subcellular location is the chloroplast. Functionally, usually encoded in the trnK tRNA gene intron. Probably assists in splicing its own and other chloroplast group II introns. This is Maturase K from Dalea wrightii (Wright's prairie clover).